Here is a 103-residue protein sequence, read N- to C-terminus: Large ribosomal subunit protein bL21 (103 aa).

Belongs to the bacterial ribosomal protein bL21 family. In terms of assembly, part of the 50S ribosomal subunit. Contacts protein L20.

In terms of biological role, this protein binds to 23S rRNA in the presence of protein L20. This Teredinibacter turnerae (strain ATCC 39867 / T7901) protein is Large ribosomal subunit protein bL21.